The sequence spans 546 residues: G1/S-specific cyclin CLN1 (546 aa).

Residues 224–265 (SNGKEWSCKRKSQSSDDSDATVEEHISSSPQSTGLDGDTTTM) form a disordered region.

Belongs to the cyclin family.

Essential for the control of the cell cycle at the G1/S (start) transition. Interacts with the CDC28 protein kinase to form MPF. The sequence is that of G1/S-specific cyclin CLN1 (CLN1) from Saccharomyces cerevisiae (strain ATCC 204508 / S288c) (Baker's yeast).